The sequence spans 279 residues: Ribosomal RNA small subunit methyltransferase A (279 aa).

Residues histidine 10, leucine 12, glycine 37, glutamate 58, aspartate 83, and asparagine 108 each contribute to the S-adenosyl-L-methionine site.

Belongs to the class I-like SAM-binding methyltransferase superfamily. rRNA adenine N(6)-methyltransferase family. RsmA subfamily.

The protein localises to the cytoplasm. It carries out the reaction adenosine(1518)/adenosine(1519) in 16S rRNA + 4 S-adenosyl-L-methionine = N(6)-dimethyladenosine(1518)/N(6)-dimethyladenosine(1519) in 16S rRNA + 4 S-adenosyl-L-homocysteine + 4 H(+). Its function is as follows. Specifically dimethylates two adjacent adenosines (A1518 and A1519) in the loop of a conserved hairpin near the 3'-end of 16S rRNA in the 30S particle. May play a critical role in biogenesis of 30S subunits. In Synechococcus elongatus (strain ATCC 33912 / PCC 7942 / FACHB-805) (Anacystis nidulans R2), this protein is Ribosomal RNA small subunit methyltransferase A.